Here is a 344-residue protein sequence, read N- to C-terminus: tRNA N6-adenosine threonylcarbamoyltransferase (344 aa).

Fe cation contacts are provided by His-110 and His-114. Residues 133–137, Asp-166, Gly-179, and Asn-278 each bind substrate; that span reads AVSGA. Residue Asp-303 participates in Fe cation binding.

The protein belongs to the KAE1 / TsaD family. Requires Fe(2+) as cofactor.

It is found in the cytoplasm. The enzyme catalyses L-threonylcarbamoyladenylate + adenosine(37) in tRNA = N(6)-L-threonylcarbamoyladenosine(37) in tRNA + AMP + H(+). Functionally, required for the formation of a threonylcarbamoyl group on adenosine at position 37 (t(6)A37) in tRNAs that read codons beginning with adenine. Is involved in the transfer of the threonylcarbamoyl moiety of threonylcarbamoyl-AMP (TC-AMP) to the N6 group of A37, together with TsaE and TsaB. TsaD likely plays a direct catalytic role in this reaction. The sequence is that of tRNA N6-adenosine threonylcarbamoyltransferase from Chlamydia caviae (strain ATCC VR-813 / DSM 19441 / 03DC25 / GPIC) (Chlamydophila caviae).